The chain runs to 80 residues: Clavanin-E (80 aa).

An N-terminal signal peptide occupies residues 1 to 19 (MKTTILILLILGLGINAKS). A propeptide spanning residues 20–29 (LEERKSEEEK) is cleaved from the precursor. F52 is subject to Phenylalanine amide. A propeptide spanning residues 54–80 (DDQQDNGKFYGYYAEDNGKHWYDTGDQ) is cleaved from the precursor.

Its subcellular location is the secreted. Its function is as follows. Has antimicrobial activity. This chain is Clavanin-E, found in Styela clava (Sea squirt).